The primary structure comprises 465 residues: MKRLKNELNALVNRGVDRHLRLAVTGLSRSGKTAFITAMVNQLLNIHAGARLPLLSAVREERLLGVKRIPQRDFGIPRFTYDEGLAQLYGDPPAWPTPTRGVSEIRLALRFKSNDSLLRHFKDTSTLYLEIVDYPGEWLLDLPMLAQDYLSWSRQMTGLLNGQRGEWSAKWRMMSEGLDPLAPADENRLADIAAAWTDYLHHCKEQGLHFIQPGRFVLPGDMAGAPALQFFPWPDVDTWGESKLAQADKHTNAGMLRERFNYYCEKVVKGFYKNHFLRFDRQIVLVDCLQPLNSGPQAFNDMRLALTQLMQSFHYGQRTLFRRLFSPVIDKLLFAATKADHVTIDQHANMVSLLQQLIQDAWQNAAFEGISMDCLGLASVQATTSGIIDVNGEKIPALRGNRLSDGAPLTVYPGEVPARLPGQAFWDKQGFQFEAFRPQVMDVDKPLPHIRLDAALEFLIGDKLR.

The Walker A motif signature appears at 26 to 33 (GLSRSGKT). GTP contacts are provided by Ser28, Gly31, Lys32, Thr33, Ala34, Trp95, Thr99, and Arg100. Residues Gly31, Lys32, Thr33, Ala34, Trp95, and Thr99 each coordinate GDP. Lys249 carries the post-translational modification N6-acetyllysine. 4 residues coordinate GTP: Lys338, Asp340, His341, and Val380. Lys338, Asp340, His341, and Val380 together coordinate GDP.

The protein to H.influenzae HI_1637. In terms of assembly, monomer in solution. It depends on Mg(2+) as a cofactor.

It catalyses the reaction GTP + H2O = GDP + phosphate + H(+). With respect to regulation, alternates between an inactive form bound to GDP and an active form bound to GTP. Likely activated by a guanine nucleotide-exchange factor (GEF). Binds GTP and GDP. Has intrinsic GTPase activity. Does not hydrolyze ATP. May act as a transducer of stress responses. In Escherichia coli (strain K12), this protein is Ras-like GTPase YcjX (ycjX).